The primary structure comprises 488 residues: Probable G-protein coupled receptor Mth-like 12 (488 aa).

An N-terminal signal peptide occupies residues Met-1–Ala-17. At Lys-18–Pro-215 the chain is on the extracellular side. Residues Asn-19, Asn-34, and Asn-55 are each glycosylated (N-linked (GlcNAc...) asparagine). 5 disulfide bridges follow: Cys-27-Cys-81, Cys-83-Cys-88, Cys-92-Cys-189, Cys-93-Cys-104, and Cys-155-Cys-209. A glycan (N-linked (GlcNAc...) asparagine) is linked at Asn-141. The helical transmembrane segment at Gly-216–Leu-236 threads the bilayer. Residues Ser-237–Lys-247 lie on the Cytoplasmic side of the membrane. A helical membrane pass occupies residues Cys-248–Phe-268. At Arg-269 to Tyr-283 the chain is on the extracellular side. Residues Phe-284–Phe-304 form a helical membrane-spanning segment. The Cytoplasmic segment spans residues Thr-305 to Arg-315. A helical membrane pass occupies residues Phe-316 to Ser-336. The Extracellular segment spans residues Met-337–His-373. An N-linked (GlcNAc...) asparagine glycan is attached at Asn-365. Residues Ile-374 to Ile-394 traverse the membrane as a helical segment. Topologically, residues Trp-395 to Glu-416 are cytoplasmic. The helical transmembrane segment at Phe-417–Leu-437 threads the bilayer. At Leu-438–Thr-454 the chain is on the extracellular side. The helical transmembrane segment at Ile-455–Leu-475 threads the bilayer. Over Ile-476–Arg-488 the chain is Cytoplasmic.

The protein belongs to the G-protein coupled receptor 2 family. Mth subfamily.

The protein localises to the cell membrane. In Drosophila melanogaster (Fruit fly), this protein is Probable G-protein coupled receptor Mth-like 12 (mthl12).